A 425-amino-acid polypeptide reads, in one-letter code: 2-methylserine hydroxymethyltransferase (425 aa).

(6S)-5,6,7,8-tetrahydrofolate-binding positions include Leu126 and 130-132; that span reads GHL. Lys235 is subject to N6-(pyridoxal phosphate)lysine. Glu251 contacts (6S)-5,6,7,8-tetrahydrofolate.

It belongs to the SHMT family. In terms of assembly, homodimer. Pyridoxal 5'-phosphate serves as cofactor.

It is found in the cytoplasm. The catalysed reaction is (6R)-5,10-methylene-5,6,7,8-tetrahydrofolate + D-alanine + H2O = 2-methylserine + (6S)-5,6,7,8-tetrahydrofolate. It participates in one-carbon metabolism; tetrahydrofolate interconversion. Inhibited by hydroxylamine and sodium borohydride. Catalyzes the reversible interconversion of alpha-methyl-L-serine to D-alanine with tetrahydrofolate (THF) serving as the one-carbon carrier. Cannot use alpha-methyl-D-serine, L-serine, D-serine or L-alanine. This chain is 2-methylserine hydroxymethyltransferase, found in Paracoccus sp.